We begin with the raw amino-acid sequence, 134 residues long: MNTDPAWMADVAFDDNGLIPAIAQDAENGQILMVAWMNREALAETAATGRAVYWSRSRQRLWRKGEESGHTQTVHDLRLDCDGDVVLLKVHQEGGIACHTGRASCFFRRLEGPAGSASWVTVDPVLKDPEHIYK.

Position 80 (Asp80) interacts with Mg(2+). Cys81 is a Zn(2+) binding site. The Mg(2+) site is built by Asp82 and Asp84. Positions 98 and 105 each coordinate Zn(2+).

It belongs to the PRA-CH family. Homodimer. Mg(2+) serves as cofactor. It depends on Zn(2+) as a cofactor.

The protein resides in the cytoplasm. It catalyses the reaction 1-(5-phospho-beta-D-ribosyl)-5'-AMP + H2O = 1-(5-phospho-beta-D-ribosyl)-5-[(5-phospho-beta-D-ribosylamino)methylideneamino]imidazole-4-carboxamide. It participates in amino-acid biosynthesis; L-histidine biosynthesis; L-histidine from 5-phospho-alpha-D-ribose 1-diphosphate: step 3/9. Functionally, catalyzes the hydrolysis of the adenine ring of phosphoribosyl-AMP. In Bordetella petrii (strain ATCC BAA-461 / DSM 12804 / CCUG 43448), this protein is Phosphoribosyl-AMP cyclohydrolase.